The chain runs to 246 residues: 1-(5-phosphoribosyl)-5-[(5-phosphoribosylamino)methylideneamino] imidazole-4-carboxamide isomerase (246 aa).

The active-site Proton acceptor is Asp-10. Asp-135 (proton donor) is an active-site residue.

The protein belongs to the HisA/HisF family.

Its subcellular location is the cytoplasm. The catalysed reaction is 1-(5-phospho-beta-D-ribosyl)-5-[(5-phospho-beta-D-ribosylamino)methylideneamino]imidazole-4-carboxamide = 5-[(5-phospho-1-deoxy-D-ribulos-1-ylimino)methylamino]-1-(5-phospho-beta-D-ribosyl)imidazole-4-carboxamide. It functions in the pathway amino-acid biosynthesis; L-histidine biosynthesis; L-histidine from 5-phospho-alpha-D-ribose 1-diphosphate: step 4/9. The chain is 1-(5-phosphoribosyl)-5-[(5-phosphoribosylamino)methylideneamino] imidazole-4-carboxamide isomerase from Methanococcoides burtonii (strain DSM 6242 / NBRC 107633 / OCM 468 / ACE-M).